The chain runs to 983 residues: Probable serine/threonine-protein kinase mps1 (983 aa).

A compositionally biased stretch (polar residues) spans 1-18 (MDTHQSFNENQHPNFNSG). Disordered stretches follow at residues 1–26 (MDTHQSFNENQHPNFNSGNHGGINMN), 252–430 (PQQQ…NNNY), 441–460 (NNDSDTSTNPNSPASSNSSV), 513–601 (QQQQ…QQQQ), and 654–691 (QQEQQLKKTNMQPPPPKQPQPQTQTQQQQKNINNSEIV). A compositionally biased stretch (low complexity) spans 253 to 278 (QQQQQQQQQPYEISSSSSLMSTPASS). Positions 279-301 (RHLSNRSSIVPTPNSSTKLSESI) are enriched in polar residues. 2 stretches are compositionally biased toward low complexity: residues 319-329 (TTTNFNTTTTT) and 348-371 (NNNNNFRIHSNNNNNSSANSSYNK). Residues 374-403 (NDEDDQDEEDEEEEDEDEDDDEEDEEEYED) are compositionally biased toward acidic residues. Residues 380–430 (DEEDEEEEDEDEDDDEEDEEEYEDNNNNNNNNNNNNNNNNNNNNNNNNNNY) are a coiled coil. Residues 404 to 429 (NNNNNNNNNNNNNNNNNNNNNNNNNN) are compositionally biased toward low complexity. Positions 474 to 517 (KLDYENNVKLQQQQQQQQQQQQQQQQQQQQQQQQQYIQQQQQQQ) form a coiled coil. A compositionally biased stretch (low complexity) spans 529–563 (NNTPTTTTTTTAATNVQNPSSSSSYISPPLSSQSS). A coiled-coil region spans residues 588–665 (SKLHQNNLQQ…EQQLKKTNMQ (78 aa)). Over residues 673–683 (QPQTQTQQQQK) the composition is skewed to low complexity. The region spanning 714 to 981 (YLRIEFIGKG…IPTLLNHDFL (268 aa)) is the Protein kinase domain. ATP contacts are provided by residues 720–728 (IGKGGSGKV) and lysine 742. Aspartate 838 acts as the Proton acceptor in catalysis.

This sequence belongs to the protein kinase superfamily. Ser/Thr protein kinase family.

The catalysed reaction is L-seryl-[protein] + ATP = O-phospho-L-seryl-[protein] + ADP + H(+). The enzyme catalyses L-threonyl-[protein] + ATP = O-phospho-L-threonyl-[protein] + ADP + H(+). This is Probable serine/threonine-protein kinase mps1 (mps1) from Dictyostelium discoideum (Social amoeba).